The sequence spans 555 residues: GPI-anchor transamidase component PIGS (555 aa).

Over 2–18 (AAAGAAATHLEVARGKR) the chain is Cytoplasmic. Positions 15 and 18 each coordinate a cardiolipin. Residues 19–39 (AALFFAAVAIVLGLPLWWKTT) traverse the membrane as a helical segment. At 40-517 (ETYRASLPYS…LHLLYFPDDQ (478 aa)) the chain is on the lumenal side. Asparagine 267 and asparagine 370 each carry an N-linked (GlcNAc...) asparagine glycan. Residues 518–532 (KFAIYIPLFLPMAVP) form a helical membrane-spanning segment. Topologically, residues 533–555 (ILLSLVKIFLETRKSWRKPEKTD) are cytoplasmic.

It belongs to the PIGS family. As to quaternary structure, heteropentamer. Part of the GPI-anchor transamidase complex, consisting of PIGK, PIGT, PIGS, PIGU and GAA1.

It localises to the endoplasmic reticulum membrane. The protein operates within glycolipid biosynthesis; glycosylphosphatidylinositol-anchor biosynthesis. Its function is as follows. Component of the glycosylphosphatidylinositol-anchor (GPI-anchor) transamidase (GPI-T) complex that catalyzes the formation of the linkage between a proprotein and a GPI-anchor and participates in GPI anchored protein biosynthesis. This is GPI-anchor transamidase component PIGS from Homo sapiens (Human).